The chain runs to 434 residues: ATP-dependent RNA helicase uap56 (434 aa).

The disordered stretch occupies residues 1-43; sequence MASAQEDLIDYEEEEELVQDQPAQEITPAADTAENGEKSDKKG. Positions 7–18 are enriched in acidic residues; the sequence is DLIDYEEEEELV. Positions 51-79 match the Q motif motif; the sequence is TGFRDFLLKPELLRAITDSGFEHPSEVQQ. In terms of domain architecture, Helicase ATP-binding spans 82–257; that stretch reads IPQSILGTDV…KKFMQNPLEI (176 aa). 95–102 provides a ligand contact to ATP; that stretch reads AKSGMGKT. Positions 204–207 match the DECD box motif; the sequence is DECD. In terms of domain architecture, Helicase C-terminal spans 269-430; the sequence is GLQQHYVKLE…ELPDEIDVGS (162 aa).

Belongs to the DEAD box helicase family. DECD subfamily. As to quaternary structure, interacts with mlo3 and rae1.

It localises to the nucleus. It catalyses the reaction ATP + H2O = ADP + phosphate + H(+). Its function is as follows. ATP-binding RNA helicase involved in transcription elongation and required for the export of mRNA out of the nucleus. SUB2 also plays a role in pre-mRNA splicing and spliceosome assembly. May be involved in rDNA and telomeric silencing, and maintenance of genome integrity. Links the mRNA adapter mlo3 to rae1 for targeting mRNA-protein complex to the proteins of the nucleoporin complex (NPC). The chain is ATP-dependent RNA helicase uap56 (uap56) from Schizosaccharomyces pombe (strain 972 / ATCC 24843) (Fission yeast).